We begin with the raw amino-acid sequence, 147 residues long: Nucleoside diphosphate kinase (147 aa).

6 residues coordinate ATP: Lys9, Phe57, Arg85, Thr91, Arg102, and Asn112. His115 serves as the catalytic Pros-phosphohistidine intermediate.

This sequence belongs to the NDK family. As to quaternary structure, homotetramer. The cofactor is Mg(2+).

The protein localises to the cytoplasm. The catalysed reaction is a 2'-deoxyribonucleoside 5'-diphosphate + ATP = a 2'-deoxyribonucleoside 5'-triphosphate + ADP. It catalyses the reaction a ribonucleoside 5'-diphosphate + ATP = a ribonucleoside 5'-triphosphate + ADP. In terms of biological role, major role in the synthesis of nucleoside triphosphates other than ATP. The ATP gamma phosphate is transferred to the NDP beta phosphate via a ping-pong mechanism, using a phosphorylated active-site intermediate. The sequence is that of Nucleoside diphosphate kinase from Fervidobacterium nodosum (strain ATCC 35602 / DSM 5306 / Rt17-B1).